The primary structure comprises 361 residues: Peptide chain release factor 1 (361 aa).

Residue Q238 is modified to N5-methylglutamine.

The protein belongs to the prokaryotic/mitochondrial release factor family. Methylated by PrmC. Methylation increases the termination efficiency of RF1.

It is found in the cytoplasm. Functionally, peptide chain release factor 1 directs the termination of translation in response to the peptide chain termination codons UAG and UAA. This chain is Peptide chain release factor 1, found in Mesomycoplasma hyopneumoniae (strain 232) (Mycoplasma hyopneumoniae).